The following is a 71-amino-acid chain: cAMP-dependent protein kinase inhibitor beta (71 aa).

Positions 1–21 (MTDVESVISSFASSARAGRRN) are disordered. Thr2 bears the Blocked amino end (Thr) mark. Position 35 is a phosphoserine (Ser35). Residues 51 to 71 (AKMKNEEKDQGQPKKPLDEDK) form a disordered region.

Belongs to the PKI family. Testis.

Its function is as follows. Extremely potent competitive inhibitor of cAMP-dependent protein kinase activity, this protein interacts with the catalytic subunit of the enzyme after the cAMP-induced dissociation of its regulatory chains. This Rattus norvegicus (Rat) protein is cAMP-dependent protein kinase inhibitor beta (Pkib).